Reading from the N-terminus, the 111-residue chain is Class I hydrophobin 2 (111 aa).

The N-terminal stretch at 1–21 is a signal peptide; that stretch reads MFSRVMFCTFLILPLLAAATA. Disulfide bonds link cysteine 30–cysteine 90, cysteine 37–cysteine 84, cysteine 38–cysteine 71, and cysteine 91–cysteine 104.

Belongs to the fungal hydrophobin family. In terms of assembly, self-assembles to form functional amyloid fibrils called rodlets. Self-assembly into fibrillar rodlets occurs spontaneously at hydrophobic:hydrophilic interfaces and the rodlets further associate laterally to form amphipathic monolayers. Behavior depends on environmental conditions: (1) when the pH increases or in the presence of Ca(2+) ions, an assembled state, beta-sheet rich, is formed; (2) when the solvent polarity increases, the vhm2 shows an increased tendency to reach hydrophobic/hydrophilic interfaces, with no detectable conformational change; and (3) at high temperature, a reversible conformational change and reversible aggregation occur. The physical and chemical properties, both in solution and as a biofilm, are affected by polysaccharides that act as hydrophilic stabilizer.

It localises to the secreted. The protein resides in the cell wall. Its function is as follows. Aerial growth, conidiation, and dispersal of filamentous fungi in the environment rely upon a capability of their secreting small amphipathic proteins called hydrophobins (HPBs) with low sequence identity. Class I can self-assemble into an outermost layer of rodlet bundles on aerial cell surfaces, conferring cellular hydrophobicity that supports fungal growth, development and dispersal; whereas Class II form highly ordered films at water-air interfaces through intermolecular interactions but contribute nothing to the rodlet structure. Vmh2 is a class I hydrophobin involved in biofilm formation and is essential for the maintenance of the surface hydrophobicity of the mycelium. Seems not to be involved in hyphal resistance against environmental stress. This is Class I hydrophobin 2 from Pleurotus ostreatus (strain PC15) (Oyster mushroom).